The sequence spans 306 residues: Palmitoyl-protein thioesterase ABHD10, mitochondrial (306 aa).

The transit peptide at 1–52 (MAGVGLAAVPAWVPCRRWGLAAVTFGFHHGLSTLLARKTERAPQWLRACRHK) directs the protein to the mitochondrion. The 100-residue stretch at 78 to 177 (IIFIPGYISN…KVVALVGVAT (100 aa)) folds into the AB hydrolase-1 domain. Residues serine 152, aspartate 249, and histidine 279 each act as charge relay system in the active site.

Belongs to the AB hydrolase superfamily.

It is found in the mitochondrion. The catalysed reaction is S-hexadecanoyl-L-cysteinyl-[protein] + H2O = L-cysteinyl-[protein] + hexadecanoate + H(+). It carries out the reaction mycophenolic acid O-acyl-beta-D-glucuronide + H2O = mycophenolate + D-glucuronate + H(+). Its activity is regulated as follows. Inhibited by palmostatin-B. Acts as an acyl-protein thioesterase that hydrolyzes fatty acids from acylated residues in proteins. Regulates the mitochondrial S-depalmitoylation of the nucleophilic active site residue of peroxiredoxin-5/PRDX5, a key antioxidant protein, therefore modulating mitochondrial antioxidant ability. Also catalyzes the deglucuronidation of mycophenolic acid acyl-glucuronide, an active metabolite of the immunosuppressant drug mycophenolate. This chain is Palmitoyl-protein thioesterase ABHD10, mitochondrial (ABHD10), found in Bos taurus (Bovine).